The chain runs to 330 residues: Malate dehydrogenase (330 aa).

12 to 18 (GAAGQIG) provides a ligand contact to NAD(+). Residues Arg93 and Arg99 each contribute to the substrate site. NAD(+) is bound by residues Asn106, Gln113, and 130 to 132 (VGN). Substrate contacts are provided by Asn132 and Arg163. His188 functions as the Proton acceptor in the catalytic mechanism.

The protein belongs to the LDH/MDH superfamily. MDH type 2 family.

It carries out the reaction (S)-malate + NAD(+) = oxaloacetate + NADH + H(+). Catalyzes the reversible oxidation of malate to oxaloacetate. This Legionella pneumophila subsp. pneumophila (strain Philadelphia 1 / ATCC 33152 / DSM 7513) protein is Malate dehydrogenase.